A 368-amino-acid chain; its full sequence is Phospho-N-acetylmuramoyl-pentapeptide-transferase (368 aa).

The next 9 membrane-spanning stretches (helical) occupy residues 30 to 50, 72 to 92, 98 to 118, 139 to 159, 170 to 190, 201 to 221, 238 to 258, 262 to 284, and 345 to 365; these read AAAI…IRFL, VPTM…LLWA, HVWL…IDDY, VALG…SVLL, FSVD…TAVS, GLAA…AYLG, AGEI…FLWF, PAEV…VIAL, and KIVI…LMTL.

This sequence belongs to the glycosyltransferase 4 family. MraY subfamily. It depends on Mg(2+) as a cofactor.

Its subcellular location is the cell inner membrane. The catalysed reaction is UDP-N-acetyl-alpha-D-muramoyl-L-alanyl-gamma-D-glutamyl-meso-2,6-diaminopimeloyl-D-alanyl-D-alanine + di-trans,octa-cis-undecaprenyl phosphate = di-trans,octa-cis-undecaprenyl diphospho-N-acetyl-alpha-D-muramoyl-L-alanyl-D-glutamyl-meso-2,6-diaminopimeloyl-D-alanyl-D-alanine + UMP. It participates in cell wall biogenesis; peptidoglycan biosynthesis. Its function is as follows. Catalyzes the initial step of the lipid cycle reactions in the biosynthesis of the cell wall peptidoglycan: transfers peptidoglycan precursor phospho-MurNAc-pentapeptide from UDP-MurNAc-pentapeptide onto the lipid carrier undecaprenyl phosphate, yielding undecaprenyl-pyrophosphoryl-MurNAc-pentapeptide, known as lipid I. This chain is Phospho-N-acetylmuramoyl-pentapeptide-transferase, found in Chlorobaculum parvum (strain DSM 263 / NCIMB 8327) (Chlorobium vibrioforme subsp. thiosulfatophilum).